Consider the following 271-residue polypeptide: Aquaporin-11 (271 aa).

At 1-14 (MSALLGLRPEVQDT) the chain is on the cytoplasmic side. Residues 15–35 (CISLGLMLLFVLFVGLARVIA) traverse the membrane as a helical segment. At 36–41 (RQQLHR) the chain is on the lumenal side. A helical membrane pass occupies residues 42–62 (PVVHAFVLEFLATFQLCCCTH). At 63-76 (ELQVLSEQDSAHPT) the chain is on the cytoplasmic side. A helical membrane pass occupies residues 77 to 97 (WTLTLIYFFSLVHGLTLVGTA). Residues 98–166 (SNPCGVMMQM…NPIHTDMSKA (69 aa)) are Lumenal-facing. Positions 99 to 101 (NPC) match the NPC motif. Residues 167–187 (IIIEAICSFIFHSALLHFQEV) form a helical membrane-spanning segment. The Cytoplasmic segment spans residues 188-194 (RTKLRIH). A helical transmembrane segment spans residues 195–215 (LLAALITFLAYAGGSLTGALF). The NPA motif lies at 216–218 (NPA). Over 216–234 (NPALALSLHFPCFDELFYK) the chain is Lumenal. The helical transmembrane segment at 235 to 255 (FFVVYWLAPSVGVLMMILMFS) threads the bilayer. Residues 256 to 271 (FFLPWLHNNQMTNKKE) are Cytoplasmic-facing.

The protein belongs to the MIP/aquaporin (TC 1.A.8) family. AQP11/AQP12 subfamily. Homodimer; disulfide-linked. Homotetramer. Can also form homomultimer. Not glycosylated. Highly expressed in the S1 proximal tubule segment,. Expressed in the testis, kidney, and liver. Weakly expressed in the heart, brain, and muscle. Highly expressed in the testis. Expressed in the proximal tubule of the cortex of 8-day-old mouse kidney. Expressed in retina specifically at retinal Mueller glial cells. Expressed in brain. Expressed abundantly at the choroid plexus but also expressed weakly in the parenchyma. Expressed at the capillary endothelium in the cerebral white matter. Expressed in adult testis, in the elongated spermatids (ES) and in residual bodies inside Sertoli cells.

It is found in the endoplasmic reticulum membrane. Its subcellular location is the cytoplasmic vesicle membrane. The protein resides in the cell membrane. The catalysed reaction is H2O(in) = H2O(out). It catalyses the reaction glycerol(in) = glycerol(out). It carries out the reaction H2O2(out) = H2O2(in). Channel protein that facilitates the transport of water, glycerol and hydrogen peroxide across membrane of cell or organelles guaranteeing intracellular homeostasis in several organes like liver, kidney and brain. In situation of stress, participates in endoplasmic reticulum (ER) homeostasis by regulating redox homeostasis through the transport of hydrogen peroxide across the endoplasmic reticulum membrane thereby regulating the oxidative stress through the NADPH oxidase 2 pathway. Plays a role by maintaining an environment suitable for translation or protein foldings in the ER lumen namely by participating in the PKD1 glycosylation processing resulting in regulation of PKD1 membrane trafficking thereby preventing the accumulation of unfolding protein in ER. Plays a role in the proximal tubule function by regulating its endosomal acidification. May play a role in postnatal kidney development. The protein is Aquaporin-11 of Mus musculus (Mouse).